A 134-amino-acid chain; its full sequence is Profilin-3 (134 aa).

Cysteines 13 and 118 form a disulfide. An Involved in PIP2 interaction motif is present at residues Ala-84–Thr-100. At Thr-114 the chain carries Phosphothreonine.

It belongs to the profilin family. In terms of assembly, occurs in many kinds of cells as a complex with monomeric actin in a 1:1 ratio. Phosphorylated by MAP kinases.

The protein localises to the cytoplasm. It is found in the cytoskeleton. Functionally, binds to actin and affects the structure of the cytoskeleton. At high concentrations, profilin prevents the polymerization of actin, whereas it enhances it at low concentrations. The chain is Profilin-3 from Olea europaea (Common olive).